The primary structure comprises 248 residues: 2,3-dihydro-2,3-dihydroxybenzoate dehydrogenase (248 aa).

9 to 33 (WVTGAGKGIGYATALAFVEAGAKVT) lines the NAD(+) pocket. Ser131 is a binding site for substrate. Tyr144 acts as the Proton acceptor in catalysis.

The protein belongs to the short-chain dehydrogenases/reductases (SDR) family. In terms of assembly, homotetramer; dimer of dimers. EntA and EntE interact together.

The enzyme catalyses (2S,3S)-2,3-dihydroxy-2,3-dihydrobenzoate + NAD(+) = 2,3-dihydroxybenzoate + NADH + H(+). It participates in siderophore biosynthesis; enterobactin biosynthesis. Its activity is regulated as follows. Inhibited by cis-2-hydroxy-3-cyclohexen-1-carboxylate, cis-2-hydroxycyclohexane-1-carboxylate and trans-2-hydroxycyclohexane-1-carboxylate. Functionally, involved in the biosynthesis of the siderophore enterobactin (enterochelin), which is a macrocyclic trimeric lactone of N-(2,3-dihydroxybenzoyl)-serine. Catalyzes the reversible NAD-dependent oxidation of the C3-hydroxyl group of 2,3-dihydro-2,3-dihydroxybenzoate (2,3-diDHB), producing the transient intermediate 2-hydroxy-3-oxo-4,6-cyclohexadiene-1-carboxylate, which undergoes rapid aromatization to the final product, 2,3-dihydroxybenzoate (2,3-DHB). Only the compounds with a C3-hydroxyl group such as methyl 2,3-dihydro-2,3-dihydroxybenzoate, methyl-3-hydroxy-1,4-cyclohexadiene-1-carboxylate, trans-3-hydroxy-2-cyclohexene-1-carboxylate, cis-3-hydroxy-4-cyclohexene-1-carboxylate, cis-3-hydroxycyclohexane-1-carboxylic acid are oxidized to the corresponding ketone products. The stereospecificity of the C3 allylic alcohol group oxidation is 3R in a 1R,3R dihydro substrate. It can also increase the DHB-AMP ligase activity of EntE by interaction EntE. In Escherichia coli (strain K12), this protein is 2,3-dihydro-2,3-dihydroxybenzoate dehydrogenase.